Reading from the N-terminus, the 29-residue chain is APALVVTATTNCCGYTGPACHPCLCTQTC.

At Ala-1 the chain carries N-acetylalanine; partial. The residue at position 2 (Pro-2) is a 4-hydroxyproline. Thr-7 and Thr-9 each carry an O-linked (HexNAc...) threonine glycan. Pro-18 and Pro-22 each carry 4-hydroxyproline. At Cys-29 the chain carries Cysteine amide.

Belongs to the conotoxin A superfamily. In terms of processing, O-linked glycans consist of Hex4-HexNAc2 hexasaccharides. N-terminus is found to be free and N-acetylated, depending on the fraction studied. Post-translationally, contains 3 disulfide bonds. Expressed by the venom duct. Low expression in the distal venom duct sections.

Its subcellular location is the secreted. Its function is as follows. Probable neurotoxin with ion channel inhibitor activity. In Conus striatus (Striated cone), this protein is Conotoxin SIVC.